Here is a 141-residue protein sequence, read N- to C-terminus: Large ribosomal subunit protein uL13 (141 aa).

It belongs to the universal ribosomal protein uL13 family. Part of the 50S ribosomal subunit.

This protein is one of the early assembly proteins of the 50S ribosomal subunit, although it is not seen to bind rRNA by itself. It is important during the early stages of 50S assembly. The protein is Large ribosomal subunit protein uL13 of Helicobacter acinonychis (strain Sheeba).